Consider the following 384-residue polypeptide: Calreticulin-3 (384 aa).

The N-terminal stretch at 1 to 19 (MAAARVPLWAICVRRVALA) is a signal peptide. Residues 20-197 (TVYFQEEFLD…GQSIESGSIE (178 aa)) are N-domain. N-linked (GlcNAc...) asparagine glycosylation is present at asparagine 42. The cysteines at positions 105 and 137 are disulfide-linked. Positions 109, 111, 128, and 135 each coordinate an alpha-D-glucoside. Tandem repeats lie at residues 191–202 (IESGSIEYDWQL), 209–220 (EKASAEAEGWDQ), 222–231 (AKDKSQDWEK), 235–246 (DASASKPSDWKG), 250–260 (GDWQAAMLQKP), 264–272 (DGLKPEGID), and 274–284 (DVWLHQKMKNS). Residues 191 to 246 (IESGSIEYDWQLTSLKKMEKASAEAEGWDQAAKDKSQDWEKHFLDASASKPSDWKG) are 4 X approximate repeats. Positions 198-294 (YDWQLTSLKK…YLTEYDLSEF (97 aa)) are P-domain. Residues 250-284 (GDWQAAMLQKPPYQDGLKPEGIDKDVWLHQKMKNS) form a 3 X approximate repeats region. The segment at 295–384 (ENIGAVGLEL…FKGFHRRNEF (90 aa)) is C-domain. Glutamate 303 provides a ligand contact to an alpha-D-glucoside. Positions 381-384 (RNEF) match the Prevents secretion from ER motif.

It belongs to the calreticulin family. Component of an EIF2 complex at least composed of CELF1/CUGBP1, CALR, CALR3, EIF2S1, EIF2S2, HSP90B1 and HSPA5.

The protein localises to the endoplasmic reticulum lumen. During spermatogenesis, may act as a lectin-independent chaperone for specific client proteins such as ADAM3. CALR3 capacity for calcium-binding may be absent or much lower than that of CALR. Required for sperm fertility. The sequence is that of Calreticulin-3 (CALR3) from Bos taurus (Bovine).